The chain runs to 348 residues: D-alanine--D-alanine ligase (348 aa).

The region spanning 132–334 (KRVLESADIP…YAELIEELVR (203 aa)) is the ATP-grasp domain. ATP is bound at residue 162 to 217 (EAVLSYPVFVKPANMGSSVGISKAESEEELRAAILLALTYDSRILIEQGVLAREIE). Positions 288, 301, and 303 each coordinate Mg(2+).

Belongs to the D-alanine--D-alanine ligase family. Requires Mg(2+) as cofactor. The cofactor is Mn(2+).

The protein resides in the cytoplasm. The enzyme catalyses 2 D-alanine + ATP = D-alanyl-D-alanine + ADP + phosphate + H(+). The protein operates within cell wall biogenesis; peptidoglycan biosynthesis. Its function is as follows. Cell wall formation. In Streptococcus equi subsp. zooepidemicus (strain MGCS10565), this protein is D-alanine--D-alanine ligase.